The following is a 315-amino-acid chain: Histone-lysine N-methyltransferase SETMAR (315 aa).

Residues 74 to 137 form the Pre-SET domain; the sequence is PGCACIKTPC…HCRNRVVQSG (64 aa). Zn(2+) contacts are provided by Cys76, Cys78, Cys83, Cys88, Cys90, Cys119, Cys123, Cys125, and Cys129. The 125-residue stretch at 140–264 folds into the SET domain; sequence FLLQVFQTEK…PGEELSYDYS (125 aa). Residues 150-152, Tyr193, Arg221, and 224-225 each bind S-adenosyl-L-methionine; these read KGW and NH. Residues Cys227, Cys288, Cys290, and Cys295 each contribute to the Zn(2+) site. The 17-residue stretch at 284-300 folds into the Post-SET domain; that stretch reads PRKPCYCGAQSCATFLP.

It belongs to the class V-like SAM-binding methyltransferase superfamily.

It localises to the nucleus. The protein resides in the chromosome. The enzyme catalyses L-lysyl(36)-[histone H3] + 2 S-adenosyl-L-methionine = N(6),N(6)-dimethyl-L-lysyl(36)-[histone H3] + 2 S-adenosyl-L-homocysteine + 2 H(+). Functionally, histone methyltransferase that methylates 'Lys-4' and 'Lys-36' of histone H3, 2 specific tags for epigenetic transcriptional activation. Specifically mediates dimethylation of H3 'Lys-36'. The protein is Histone-lysine N-methyltransferase SETMAR of Rattus norvegicus (Rat).